Here is a 467-residue protein sequence, read N- to C-terminus: MKSQTIPTRRVRGFRRAAVIRQLLSRDKTPLTILLLASLTGVLAGLAGVAFEKAVAWVTAHRIEGLAQVAHIPWLVWLLAFLFSALLAMVGYFLVRRFAPEAGGSGIPEIEGALEELRPVRWWRVLPVKFFGGMGTLGAGMVLGREGPMVQMGGNIGRMVLDIFHRPDAEARHTLLATGAAAGLAAAFNAPLAGILFIIEEMRTQFHYNLISIKAVFTGVIMSTIVFRIFNGEKSVIEVGQLTDAPVYTLWLYLLLGIIFGAVGPLFNRLVLGMQDVFARIHGGNTTRWVLLGGAIGGACGLLALWEPAAAGGGFGLIPIAAAGNFTVGMLLFIFIARVVTTVFCFSSGAPGGIFAPMLALGTLLGSAFGMACAAWFPQWHLQAGTFAIAGMGALLAASVRAPITGIVLVLEMTDNYQLILPMIITCLGATLLAQFLGGKPLYSTILARTLAKQEAERQAQADGRNT.

Over 1–30 (MKSQTIPTRRVRGFRRAAVIRQLLSRDKTP) the chain is Cytoplasmic. The helical transmembrane segment at 31–67 (LTILLLASLTGVLAGLAGVAFEKAVAWVTAHRIEGLA) threads the bilayer. Topologically, residues 68–74 (QVAHIPW) are periplasmic. The helical transmembrane segment at 75–98 (LVWLLAFLFSALLAMVGYFLVRRF) threads the bilayer. The Cytoplasmic segment spans residues 99 to 106 (APEAGGSG). The Selectivity filter part_1 motif lies at 104–108 (GSGIP). Ser-105 contacts chloride. Residues 107-114 (IPEIEGAL) constitute an intramembrane region (helical). At 115-121 (EELRPVR) the chain is on the cytoplasmic side. Residues 122–139 (WWRVLPVKFFGGMGTLGA) traverse the membrane as a helical segment. At 140 to 145 (GMVLGR) the chain is on the periplasmic side. The short motif at 144–148 (GREGP) is the Selectivity filter part_2 element. A helical transmembrane segment spans residues 146-164 (EGPMVQMGGNIGRMVLDIF). Residues 165–174 (HRPDAEARHT) are Cytoplasmic-facing. 2 consecutive intramembrane regions (helical) follow at residues 175-187 (LLAT…LAAA) and 191-199 (PLAGILFII). Residues 200 to 212 (EEMRTQFHYNLIS) lie on the Cytoplasmic side of the membrane. The chain crosses the membrane as a helical span at residues 213 to 230 (IKAVFTGVIMSTIVFRIF). Residues 231–250 (NGEKSVIEVGQLTDAPVYTL) lie on the Periplasmic side of the membrane. A helical transmembrane segment spans residues 251–279 (WLYLLLGIIFGAVGPLFNRLVLGMQDVFA). Residues 280 to 285 (RIHGGN) are Cytoplasmic-facing. Residues 286–307 (TTRWVLLGGAIGGACGLLALWE) form a helical membrane-spanning segment. Residues 308–327 (PAAAGGGFGLIPIAAAGNFT) lie on the Periplasmic side of the membrane. Residues 328 to 347 (VGMLLFIFIARVVTTVFCFS) form a helical membrane-spanning segment. Residues 348–352 (SGAPG) lie on the Cytoplasmic side of the membrane. The Selectivity filter part_3 signature appears at 353–357 (GIFAP). A helical membrane pass occupies residues 353 to 374 (GIFAPMLALGTLLGSAFGMACA). The chloride site is built by Ile-354 and Phe-355. Over 375-384 (AWFPQWHLQA) the chain is Periplasmic. The segment at residues 385-399 (GTFAIAGMGALLAAS) is an intramembrane region (helical). Positions 400 to 402 (VRA) form an intramembrane region, note=Loop between two helices. The segment at residues 403 to 414 (PITGIVLVLEMT) is an intramembrane region (helical). An intramembrane region (note=Loop between two helices) is located at residues 415–419 (DNYQL). Residues 420–436 (ILPMIITCLGATLLAQF) form a helical membrane-spanning segment. Topologically, residues 437–467 (LGGKPLYSTILARTLAKQEAERQAQADGRNT) are cytoplasmic. Tyr-443 is a chloride binding site.

Belongs to the chloride channel (TC 2.A.49) family. ClcA subfamily. In terms of assembly, homodimer.

It localises to the cell inner membrane. It carries out the reaction 2 chloride(in) + H(+)(out) = 2 chloride(out) + H(+)(in). Proton-coupled chloride transporter. Functions as antiport system and exchanges two chloride ions for 1 proton. Probably acts as an electrical shunt for an outwardly-directed proton pump that is linked to amino acid decarboxylation, as part of the extreme acid resistance (XAR) response. The sequence is that of H(+)/Cl(-) exchange transporter ClcA from Cronobacter sakazakii (strain ATCC BAA-894) (Enterobacter sakazakii).